A 111-amino-acid polypeptide reads, in one-letter code: MTNFWILMLIAITISLASQFFIKKKYGIDKSGWRYKHVSNTHKWIEITLLILFVFSLSFFPVEYLLLLFFIVIDSIRIFMEWHYRPEDKQYMYHIVEVSLMFMLLIYVCTL.

The next 3 membrane-spanning stretches (helical) occupy residues 4-22, 49-71, and 91-108; these read FWILMLIAITISLASQFFI, LLILFVFSLSFFPVEYLLLLFFI, and YMYHIVEVSLMFMLLIYV.

Its subcellular location is the cell membrane. This is an uncharacterized protein from Bacillus subtilis (strain 168).